The primary structure comprises 429 residues: S-adenosylmethionine synthase (429 aa).

Residue Glu-9 coordinates Mg(2+). His-15 contacts ATP. Residue Glu-43 coordinates K(+). The L-methionine site is built by Glu-56 and Gln-99. Residues 167 to 169, 235 to 238, Asp-246, 252 to 253, Ala-269, Lys-273, and Lys-277 contribute to the ATP site; these read DGK, SGRF, and RK. Asp-246 is an L-methionine binding site. Lys-277 contributes to the L-methionine binding site.

The protein belongs to the AdoMet synthase family. Homotetramer. Mn(2+) serves as cofactor. The cofactor is Mg(2+). Co(2+) is required as a cofactor. Requires K(+) as cofactor.

The protein localises to the cytoplasm. The enzyme catalyses L-methionine + ATP + H2O = S-adenosyl-L-methionine + phosphate + diphosphate. It participates in amino-acid biosynthesis; S-adenosyl-L-methionine biosynthesis; S-adenosyl-L-methionine from L-methionine: step 1/1. Its function is as follows. Catalyzes the formation of S-adenosylmethionine from methionine and ATP. The reaction comprises two steps that are both catalyzed by the same enzyme: formation of S-adenosylmethionine (AdoMet) and triphosphate, and subsequent hydrolysis of the triphosphate. The protein is S-adenosylmethionine synthase (SAMS) of Carica papaya (Papaya).